The chain runs to 297 residues: Bifonsecin B biosynthesis cluster protein A (297 aa).

A signal peptide spans 1–20 (MHFWWTAISAGLLCLPQALG). Residues N26, N56, N75, N124, N175, N210, and N280 are each glycosylated (N-linked (GlcNAc...) asparagine).

It belongs to the bfoA family.

Part of the gene cluster that mediates the biosynthesis of bifonsecin B, a dimeric gamma-naphthopyrone. The first step in the biosynthesis of bifonsecin B is the production of gamma-naphthopyrone precursor YWA1 by the non-reducing polyketide synthase albA, via condensation of one acetyl-CoA starter unit with 6 malonyl-CoA units. YWA1 is then methylated by bfoE at position C-6 to yield foncesin which is further methylated at position C-8 by bfoD to produce fonsecin B. A key enzyme in the biosynthetic pathway is the cytochrome P450 monooxygenase bfoB which catalyzes the oxidative dimerization of fonsecin B to bifonsecin B. Bfob also catalyzes the oxidative dimerization of rubrofusarin B into nigerone. The stereoselectivity of bfoB is influenced by the two natural monomeric substrates; homodimerization of fonsecin B yields a stereochemically pure biaryl, M-foncerine B, while rubrofusarin B yields a mixture of enantiomers M- and P-nigerone. The function of bfoA within the bifonsecin B biosynthesis pathway has not been determined yet. The chain is Bifonsecin B biosynthesis cluster protein A from Aspergillus brasiliensis (strain CBS 101740 / IMI 381727 / IBT 21946).